We begin with the raw amino-acid sequence, 238 residues long: Ion-translocating oxidoreductase complex subunit E (238 aa).

6 helical membrane-spanning segments follow: residues alanine 24–valine 44, leucine 52–methionine 72, valine 84–methionine 104, glutamate 106–glycine 126, isoleucine 141–isoleucine 161, and glycine 195–alanine 215.

It belongs to the NqrDE/RnfAE family. In terms of assembly, the complex is composed of six subunits: RnfA, RnfB, RnfC, RnfD, RnfE and RnfG.

The protein localises to the cell inner membrane. Functionally, part of a membrane-bound complex that couples electron transfer with translocation of ions across the membrane. The protein is Ion-translocating oxidoreductase complex subunit E of Azotobacter vinelandii (strain DJ / ATCC BAA-1303).